Here is a 170-residue protein sequence, read N- to C-terminus: tRNA-splicing endonuclease (170 aa).

Residues Y110, H116, and K147 contribute to the active site.

It belongs to the tRNA-intron endonuclease family. Archaeal short subfamily. Homotetramer; although the tetramer contains four active sites, only two participate in the cleavage. Therefore, it should be considered as a dimer of dimers.

It catalyses the reaction pretRNA = a 3'-half-tRNA molecule with a 5'-OH end + a 5'-half-tRNA molecule with a 2',3'-cyclic phosphate end + an intron with a 2',3'-cyclic phosphate and a 5'-hydroxyl terminus.. Its function is as follows. Endonuclease that removes tRNA introns. Cleaves pre-tRNA at the 5'- and 3'-splice sites to release the intron. The products are an intron and two tRNA half-molecules bearing 2',3' cyclic phosphate and 5'-OH termini. Recognizes a pseudosymmetric substrate in which 2 bulged loops of 3 bases are separated by a stem of 4 bp. This is tRNA-splicing endonuclease from Pyrococcus horikoshii (strain ATCC 700860 / DSM 12428 / JCM 9974 / NBRC 100139 / OT-3).